A 325-amino-acid polypeptide reads, in one-letter code: Phosphate acyltransferase (325 aa).

The protein belongs to the PlsX family. Homodimer. Probably interacts with PlsY.

The protein resides in the cytoplasm. The enzyme catalyses a fatty acyl-[ACP] + phosphate = an acyl phosphate + holo-[ACP]. It functions in the pathway lipid metabolism; phospholipid metabolism. In terms of biological role, catalyzes the reversible formation of acyl-phosphate (acyl-PO(4)) from acyl-[acyl-carrier-protein] (acyl-ACP). This enzyme utilizes acyl-ACP as fatty acyl donor, but not acyl-CoA. This Staphylococcus epidermidis (strain ATCC 12228 / FDA PCI 1200) protein is Phosphate acyltransferase.